The sequence spans 80 residues: UPF0291 protein LCA_1274 (80 aa).

The tract at residues 59–80 is disordered; that stretch reads EGKEVTPEKVKDIQREKGLRDD.

Belongs to the UPF0291 family.

It localises to the cytoplasm. This is UPF0291 protein LCA_1274 from Latilactobacillus sakei subsp. sakei (strain 23K) (Lactobacillus sakei subsp. sakei).